A 277-amino-acid polypeptide reads, in one-letter code: Bifunctional protein FolD 1 (277 aa).

Residues 162–164 (GDS) and Ser187 contribute to the NADP(+) site.

This sequence belongs to the tetrahydrofolate dehydrogenase/cyclohydrolase family. In terms of assembly, homodimer.

It catalyses the reaction (6R)-5,10-methylene-5,6,7,8-tetrahydrofolate + NADP(+) = (6R)-5,10-methenyltetrahydrofolate + NADPH. The catalysed reaction is (6R)-5,10-methenyltetrahydrofolate + H2O = (6R)-10-formyltetrahydrofolate + H(+). It participates in one-carbon metabolism; tetrahydrofolate interconversion. Functionally, catalyzes the oxidation of 5,10-methylenetetrahydrofolate to 5,10-methenyltetrahydrofolate and then the hydrolysis of 5,10-methenyltetrahydrofolate to 10-formyltetrahydrofolate. The polypeptide is Bifunctional protein FolD 1 (Syntrophomonas wolfei subsp. wolfei (strain DSM 2245B / Goettingen)).